Reading from the N-terminus, the 107-residue chain is Homeobox protein HD-3 (107 aa).

The segment at residues 6 to 65 is a DNA-binding region (homeobox); sequence SKAPRTRMTAGQTRVLMSFFKDNPFPSTTAREKLSKVLGVGPRTVQIWFQNQRQKARGQA.

It is found in the nucleus. The protein is Homeobox protein HD-3 (HD-3) of Encephalitozoon cuniculi (strain GB-M1) (Microsporidian parasite).